The following is a 116-amino-acid chain: uncharacterized protein (116 aa).

At 1-46 the chain is on the extracellular side; sequence MGDNTTVAPGTNQTLVEEDLGAQITHTLMVQIMSKLNEMLTEYQPQ. Asn4 and Asn12 each carry an N-linked (GlcNAc...) asparagine; by host glycan. A helical membrane pass occupies residues 47 to 67; the sequence is IIGIGATVLAIFVIMFISLLI. Residues 68-116 lie on the Cytoplasmic side of the membrane; it reads ILGCNCIRPYNFKNLKRYITGKASKSVEYQPLKMSAVNMGMDEDDEFLA.

The protein resides in the host membrane. This is an uncharacterized protein from Magallana gigas (Pacific oyster).